We begin with the raw amino-acid sequence, 215 residues long: 3,4-dihydroxy-2-butanone 4-phosphate synthase (215 aa).

Residues 38-39, D43, 151-155, and E175 contribute to the D-ribulose 5-phosphate site; these read RE and RRGHT. E39 is a binding site for Mg(2+). Residue H154 coordinates Mg(2+).

Belongs to the DHBP synthase family. As to quaternary structure, homodimer. The cofactor is Mg(2+). Requires Mn(2+) as cofactor.

The catalysed reaction is D-ribulose 5-phosphate = (2S)-2-hydroxy-3-oxobutyl phosphate + formate + H(+). It functions in the pathway cofactor biosynthesis; riboflavin biosynthesis; 2-hydroxy-3-oxobutyl phosphate from D-ribulose 5-phosphate: step 1/1. Catalyzes the conversion of D-ribulose 5-phosphate to formate and 3,4-dihydroxy-2-butanone 4-phosphate. The polypeptide is 3,4-dihydroxy-2-butanone 4-phosphate synthase (Haemophilus influenzae (strain ATCC 51907 / DSM 11121 / KW20 / Rd)).